We begin with the raw amino-acid sequence, 632 residues long: ATP-dependent zinc metalloprotease FtsH (632 aa).

Residues 1 to 9 (MKPTNEPKK) lie on the Cytoplasmic side of the membrane. A helical membrane pass occupies residues 10 to 30 (PFFQSPIILAVLGGILLIFFL). At 31-116 (RSFNSDGSFS…INYSGFSESN (86 aa)) the chain is on the periplasmic side. Residues 117–137 (FFTDMLGWLMPILVILGLWMF) traverse the membrane as a helical segment. At 138–632 (MANRMQKNMG…RLIPLEEQAS (495 aa)) the chain is on the cytoplasmic side. ATP contacts are provided by residues A173, 213–217 (GTGKT), and H354. H434 is a binding site for Zn(2+). The active site involves E435. Positions 438 and 511 each coordinate Zn(2+).

The protein in the central section; belongs to the AAA ATPase family. In the C-terminal section; belongs to the peptidase M41 family. Homohexamer. It depends on Zn(2+) as a cofactor.

The protein localises to the cell inner membrane. Functionally, acts as a processive, ATP-dependent zinc metallopeptidase for both cytoplasmic and membrane proteins. Plays a role in the quality control of integral membrane proteins. This chain is ATP-dependent zinc metalloprotease FtsH, found in Helicobacter pylori (strain ATCC 700392 / 26695) (Campylobacter pylori).